We begin with the raw amino-acid sequence, 276 residues long: MIFNENTPNFIDFKESFKELPLSDETFKIIEENGIKLREIAIGEFSGRDSVAAIIKAIEEGIDFVLPVVAFTGTDYGNINIFYKNWEIVNKRIKEIDKDKILLPLHFMFEPKLWNALNGRWVVLSFKRYGYYRPCIGCHAYLRIIRIPLAKHLGGKIISGERLYHNGDFKIDQIEEVLNVYSKICRDFDVELILPIRYIREGKKIKEIIGEEWEQGEKQFSCVFSGNYRDKDGKVIFDKEGILKMLNEFIYPASVEILKEGYKGNFNYLNIVKKLI.

This is an uncharacterized protein from Methanocaldococcus jannaschii (strain ATCC 43067 / DSM 2661 / JAL-1 / JCM 10045 / NBRC 100440) (Methanococcus jannaschii).